The chain runs to 99 residues: Integration host factor subunit alpha (99 aa).

This sequence belongs to the bacterial histone-like protein family. In terms of assembly, heterodimer of an alpha and a beta chain.

Its function is as follows. This protein is one of the two subunits of integration host factor, a specific DNA-binding protein that functions in genetic recombination as well as in transcriptional and translational control. This is Integration host factor subunit alpha from Pseudoalteromonas translucida (strain TAC 125).